The sequence spans 160 residues: UPF0178 protein BPP1051 (160 aa).

The protein belongs to the UPF0178 family.

The sequence is that of UPF0178 protein BPP1051 from Bordetella parapertussis (strain 12822 / ATCC BAA-587 / NCTC 13253).